The following is a 274-amino-acid chain: Large ribosomal subunit protein uL2 (274 aa).

Residues 223–274 (VAMNPVDHPHGGGEGRTSGGRHPVTPWGVPTKGYKTRSNKRTDKYIVRRRTK) form a disordered region.

This sequence belongs to the universal ribosomal protein uL2 family. Part of the 50S ribosomal subunit. Forms a bridge to the 30S subunit in the 70S ribosome.

In terms of biological role, one of the primary rRNA binding proteins. Required for association of the 30S and 50S subunits to form the 70S ribosome, for tRNA binding and peptide bond formation. It has been suggested to have peptidyltransferase activity; this is somewhat controversial. Makes several contacts with the 16S rRNA in the 70S ribosome. The protein is Large ribosomal subunit protein uL2 of Shewanella amazonensis (strain ATCC BAA-1098 / SB2B).